The primary structure comprises 675 residues: Heat shock 70 kDa protein 12A (675 aa).

The segment covering 1–13 has biased composition (basic and acidic residues); it reads MADKEAGGSDGPR. The disordered stretch occupies residues 1 to 45; the sequence is MADKEAGGSDGPRETAPTSAYSSPARSLGDTGITPLSPSHIVNDT. N-acetylalanine is present on alanine 2. Composition is skewed to polar residues over residues 16-25 and 34-45; these read APTSAYSSPA and TPLSPSHIVNDT.

It belongs to the heat shock protein 70 family. In terms of assembly, interacts with SORL1 (via cytosolic C-terminus); this interaction affects SORL1 internalization and subcellular localization. In terms of tissue distribution, widely expressed with highest levels in brain, kidney and muscle.

It is found in the cytoplasm. The protein resides in the nucleus. Adapter protein for SORL1, but not SORT1. Delays SORL1 internalization and affects SORL1 subcellular localization. This chain is Heat shock 70 kDa protein 12A (HSPA12A), found in Homo sapiens (Human).